Consider the following 247-residue polypeptide: Trypsin-2 (247 aa).

Positions 1-15 (MNLLLILTFVAAAVA) are cleaved as a signal peptide. Positions 16–23 (APFDDDDK) are cleaved as a propeptide — activation peptide. One can recognise a Peptidase S1 domain in the interval 24–244 (IVGGYICEEN…YVDWIKDTIA (221 aa)). Disulfide bonds link cysteine 30/cysteine 160, cysteine 48/cysteine 64, cysteine 171/cysteine 185, and cysteine 196/cysteine 220. Histidine 63 serves as the catalytic Charge relay system. Glutamate 75, asparagine 77, valine 80, and glutamate 85 together coordinate Ca(2+). Catalysis depends on aspartate 107, which acts as the Charge relay system. Tyrosine 154 is modified (sulfotyrosine). Serine 200 (charge relay system) is an active-site residue.

The protein belongs to the peptidase S1 family. Ca(2+) is required as a cofactor. In terms of processing, sulfated on tyrosine. Sulfation at Tyr-154 increases selectivity towards basic versus apolar residues at the P2' position of inhibitors that bind in a substrate-like fashion. Although the increase in selectivity is relatively small, it may facilitate digestion of a broader range of dietary proteins. Expressed in Paneth cells, at the base of small intestinal crypts.

Its subcellular location is the secreted. It localises to the extracellular space. It catalyses the reaction Preferential cleavage: Arg-|-Xaa, Lys-|-Xaa.. In the ileum, may be involved in defensin processing, including DEFA5. The polypeptide is Trypsin-2 (PRSS2) (Homo sapiens (Human)).